The sequence spans 787 residues: Vacuolar protein sorting-associated protein 35A (787 aa).

Met-1 carries the N-acetylmethionine modification.

This sequence belongs to the VPS35 family. In terms of assembly, component of the retromer complex which consists of VPS29 (MAG1), VPS26 (VPS26A or VPS26B), VPS35 (VPS35A or VPS35B or VPS35C), VPS5/17 (SNX1 or SNX2A or SNX2B). Component of a retromer subcomplex consisting of VPS29 (MAG1), VPS26 (VPS26A or VPS26B), VPS35 (VPS35A or VPS35B or VPS35C). Interacts with RABG3F.

It localises to the cytoplasm. Its subcellular location is the endosome membrane. The protein localises to the prevacuolar compartment membrane. It is found in the golgi apparatus. The protein resides in the trans-Golgi network membrane. In terms of biological role, plays a role in vesicular protein sorting. Component of the membrane-associated retromer complex which is essential in endosome-to-Golgi retrograde transport. Also involved in the efficient sorting of seed storage proteins. Binds alone to endosomal membranes and is required for recruitment of VPS26 and VPS29 to membrane. The VPS29-VPS26-VPS35 subcomplex may be involved in recycling of specific cargos from endosome to the plasma membrane. The protein is Vacuolar protein sorting-associated protein 35A (VPS35A) of Arabidopsis thaliana (Mouse-ear cress).